The chain runs to 370 residues: Phosphate acyltransferase (370 aa).

The segment at 349-370 is disordered; it reads SAGRAGQDAPDEMAAPGRSEKR.

The protein belongs to the PlsX family. Homodimer. Probably interacts with PlsY.

The protein localises to the cytoplasm. It carries out the reaction a fatty acyl-[ACP] + phosphate = an acyl phosphate + holo-[ACP]. It participates in lipid metabolism; phospholipid metabolism. Its function is as follows. Catalyzes the reversible formation of acyl-phosphate (acyl-PO(4)) from acyl-[acyl-carrier-protein] (acyl-ACP). This enzyme utilizes acyl-ACP as fatty acyl donor, but not acyl-CoA. This Cereibacter sphaeroides (strain ATCC 17029 / ATH 2.4.9) (Rhodobacter sphaeroides) protein is Phosphate acyltransferase.